Consider the following 127-residue polypeptide: Ribonuclease VapC6 (127 aa).

A PINc domain is found at 26–120 (EPQRAEFCRS…ERHLPDIRVR (95 aa)). D86 serves as a coordination point for Mg(2+).

Belongs to the PINc/VapC protein family. It depends on Mg(2+) as a cofactor.

Functionally, toxic component of a type II toxin-antitoxin (TA) system. An RNase. The cognate antitoxin is VapB6. The polypeptide is Ribonuclease VapC6 (Mycobacterium tuberculosis (strain CDC 1551 / Oshkosh)).